The following is a 371-amino-acid chain: Cathepsin L1 (371 aa).

Positions 1–48 (MNHLGVFETRFRPRTRHKSQRAQLIPEQITMRTAVLLPLLALLAVAQA) are cleaved as a signal peptide. A propeptide spans 49 to 153 (VSFADVVMEE…VTFISPAHVT (105 aa)) (activation peptide). Asparagine 127 carries N-linked (GlcNAc...) asparagine glycosylation. 3 disulfides stabilise this stretch: cysteine 175–cysteine 218, cysteine 209–cysteine 251, and cysteine 310–cysteine 360. Residue cysteine 178 is part of the active site. Residue histidine 317 is part of the active site. Residues 327–329 (DES) constitute a propeptide that is removed on maturation. The active site involves asparagine 338.

Belongs to the peptidase C1 family. As to quaternary structure, dimer of a heavy and a light chain linked by disulfide bonds. In terms of tissue distribution, in the embryo, predominantly expressed in the midgut. Also expressed in larval alimentary organs such as salivary gland and midgut including gastric caeca.

It localises to the lysosome. The enzyme catalyses Specificity close to that of papain. As compared to cathepsin B, cathepsin L exhibits higher activity toward protein substrates, but has little activity on Z-Arg-Arg-NHMec, and no peptidyl-dipeptidase activity.. Its function is as follows. Important for the overall degradation of proteins in lysosomes. Essential for adult male and female fertility. May play a role in digestion. The sequence is that of Cathepsin L1 from Drosophila melanogaster (Fruit fly).